The chain runs to 1121 residues: Ataxin-2 homolog (1121 aa).

The segment covering 1 to 10 has biased composition (basic residues); the sequence is MNNNSKRKTR. Residues 1–53 are disordered; sequence MNNNSKRKTRPSGGGGGGGASGGISRYNANDNSLRPANNKSGAAGNSAGAGAG. Residues 12 to 22 are compositionally biased toward gly residues; the sequence is SGGGGGGGASG. A compositionally biased stretch (polar residues) spans 27–36; the sequence is YNANDNSLRP. Residues 37–47 show a composition bias toward low complexity; sequence ANNKSGAAGNS. Residues 71-146 enclose the Sm domain; that stretch reads FFMHSATALV…VVKIVAKDFD (76 aa). Ser219 and Ser232 each carry phosphoserine. Disordered stretches follow at residues 270 to 376, 422 to 458, 476 to 935, and 1039 to 1076; these read FAAV…GQGG, GKVMRGNVPPNSSGGGNISAVQGGNGNPVGQSKGGYQ, MHGS…TTGT, and QTPQSTTPSPGQPHQPFHPPPQPSPAGGGPQPAYTPPT. Residues 274–310 are compositionally biased toward basic and acidic residues; it reads ERPEQDHRRDGDRERERNDRDREREERDRDRDRDRGN. Residues 323 to 347 show a composition bias toward polar residues; the sequence is ETMSSDRYITKQTRGPQMSHVSMSS. Gly residues-rich tracts occupy residues 367–376 and 434–448; these read ISGGGAGQGG and SGGGNISAVQGGNGN. Composition is skewed to polar residues over residues 476–487 and 499–524; these read MHGSSQYRNPSH and ANANTNKPLPQRQIRQYQGSQSNSLN. Low complexity-rich tracts occupy residues 552 to 596, 623 to 684, 697 to 711, and 720 to 773; these read PPLQ…PQRQ, PPQQ…MQHQ, QPHYVPQPQQQQPQP, and QQQQ…APEP. Pro residues predominate over residues 774–789; it reads SQQPLPLYHPMPPPQT. 2 stretches are compositionally biased toward low complexity: residues 807–825 and 835–890; these read ILTAQQPPQQQQLAATPKP and TTTP…STPV. 2 stretches are compositionally biased toward pro residues: residues 914–926 and 1048–1062; these read PSRPHTPQTPVPM and PGQPHQPFHPPPQPS.

Belongs to the ataxin-2 family.

It localises to the cytoplasm. Its function is as follows. Regulator of actin filament formation, though it does not directly assemble with actin filaments. Required for oocyte specification and oocyte positioning in the female germline. Also required for normal eye development and bristle morphology. This is Ataxin-2 homolog from Drosophila pseudoobscura pseudoobscura (Fruit fly).